Reading from the N-terminus, the 365-residue chain is Outer membrane protein assembly factor BamC (365 aa).

Residues 1 to 19 (MKHNRLAIAALAPVLILVG) form the signal peptide. Cys-20 carries the N-palmitoyl cysteine lipid modification. A lipid anchor (S-diacylglycerol cysteine) is attached at Cys-20.

Belongs to the BamC family. As to quaternary structure, part of the Bam complex.

The protein resides in the cell outer membrane. Part of the outer membrane protein assembly complex, which is involved in assembly and insertion of beta-barrel proteins into the outer membrane. This is Outer membrane protein assembly factor BamC from Ferrimonas balearica (strain DSM 9799 / CCM 4581 / KCTC 23876 / PAT).